A 330-amino-acid polypeptide reads, in one-letter code: Polyprenal reductase (330 aa).

Residues M1–R16 lie on the Cytoplasmic side of the membrane. A helical membrane pass occupies residues A17 to A37. At R38–S89 the chain is on the lumenal side. The helical transmembrane segment at L90–A110 threads the bilayer. Topologically, residues L111 to K136 are cytoplasmic. The chain crosses the membrane as a helical span at residues L137–F157. Residues E158 to A169 lie on the Lumenal side of the membrane. A helical transmembrane segment spans residues I170 to L190. The Cytoplasmic segment spans residues S191 to N206. A helical transmembrane segment spans residues L207–A227. Residues H228–S277 lie on the Lumenal side of the membrane. Residues M278 to F298 form a helical membrane-spanning segment. Topologically, residues S299–F330 are cytoplasmic.

It belongs to the steroid 5-alpha reductase family. Polyprenal reductase subfamily. Expressed in the 2 tissues tested i.e. testis and liver.

It localises to the endoplasmic reticulum membrane. It carries out the reaction a di-trans,poly-cis-dolichal + NADP(+) = a di-trans,poly-cis-polyprenal + NADPH + H(+). The catalysed reaction is a 3-oxo-5alpha-steroid + NADP(+) = a 3-oxo-Delta(4)-steroid + NADPH + H(+). The enzyme catalyses androst-4-ene-3,17-dione + NADPH + H(+) = 5alpha-androstan-3,17-dione + NADP(+). It catalyses the reaction 17beta-hydroxy-5alpha-androstan-3-one + NADP(+) = testosterone + NADPH + H(+). It functions in the pathway protein modification; protein glycosylation. Functionally, plays a key role in early steps of protein N-linked glycosylation by being involved in the conversion of polyprenol into dolichol. Acts as a polyprenal reductase that mediates the reduction of polyprenal into dolichal in a NADP-dependent mechanism. Dolichols are required for the synthesis of dolichol-linked monosaccharides and the oligosaccharide precursor used for N-glycosylation. Also able to convert testosterone (T) into 5-alpha-dihydrotestosterone (DHT). The polypeptide is Polyprenal reductase (Rattus norvegicus (Rat)).